We begin with the raw amino-acid sequence, 248 residues long: Granzyme-like protein 2 (248 aa).

The first 18 residues, 1–18 (MFLFLIFLVAVLPVNTEG), serve as a signal peptide directing secretion. Residues 19-20 (GE) constitute a propeptide, activation peptide. The Peptidase S1 domain maps to 21 to 243 (IVWGTESKPH…FIPWIQKTMK (223 aa)). Cysteines 50 and 66 form a disulfide. Residues His65 and Asp108 each act as charge relay system in the active site. Intrachain disulfides connect Cys142–Cys207 and Cys172–Cys186. N-linked (GlcNAc...) asparagine glycosylation is found at Asn152 and Asn180. Ser201 (charge relay system) is an active-site residue.

The protein belongs to the peptidase S1 family. Granzyme subfamily. Duodenum, lung and spleen.

In terms of biological role, this enzyme is necessary for target cell lysis in cell-mediated immune responses. The sequence is that of Granzyme-like protein 2 from Rattus norvegicus (Rat).